We begin with the raw amino-acid sequence, 705 residues long: Choline transporter-like protein 2 (705 aa).

Topologically, residues 1–33 are cytoplasmic; the sequence is MGKDSQHYYGKHGTPQKYDPTFKGPIYNRGCTD. Residue Thr-14 is modified to Phosphothreonine. A helical membrane pass occupies residues 34-54; the sequence is IICCVLLFLAIVGYVAVGIIA. Topologically, residues 55-232 are extracellular; sequence WTHGDPRKVI…QIFEDYTVSW (178 aa). N-linked (GlcNAc...) asparagine glycans are attached at residues Asn-187 and Asn-200. A helical transmembrane segment spans residues 233 to 253; sequence YWIVIGLVIAMLLSLMFIVLL. The Cytoplasmic segment spans residues 254–256; sequence RFL. The helical transmembrane segment at 257 to 277 threads the bilayer; it reads AGVMVWVMIVMVILVLGYGIF. Residues 278-315 lie on the Extracellular side of the membrane; sequence HCYAEYSRLRGEAGSDVSLVDLGFQTDLRVYLHLRQTW. The chain crosses the membrane as a helical span at residues 316 to 336; the sequence is MAFMIILSILEVVIILLLIFL. At 337-364 the chain is on the cytoplasmic side; the sequence is RKRILIAIALIKEASRAVGHVMCSMLYP. Residues 365–385 traverse the membrane as a helical segment; sequence LVTFFLLCLCIAYWASTSVFL. Residues 386 to 453 are Extracellular-facing; that stretch reads STSNVAVYKI…LQIFNAFMFF (68 aa). A glycan (N-linked (GlcNAc...) asparagine) is linked at Asn-416. Residues 454 to 476 traverse the membrane as a helical segment; that stretch reads WLANFVLALGQVTLAGAFASYYW. At 477 to 503 the chain is on the cytoplasmic side; the sequence is AMRKPDDMPAFPLFSAFGRALRYHTGS. A helical membrane pass occupies residues 504–524; the sequence is LAFGSLILAIVQIIRVMLEYL. At 525-562 the chain is on the extracellular side; it reads DQRLKAAQNKFAKFLMVCLKCCFWCLEKFIKFLNRNAY. A helical membrane pass occupies residues 563–583; it reads IMIAIYGTNFCTSARNAFFLL. The Cytoplasmic segment spans residues 584-598; it reads MRNIIRVAVLDKVTD. Residues 599–619 traverse the membrane as a helical segment; it reads FLFLLGKLLIVGSVGILAFFF. Residues 620–637 are Extracellular-facing; sequence FTHRIRIVQDTAPPLNYY. The helical transmembrane segment at 638-658 threads the bilayer; the sequence is WVPILTVIIGSYLIAHGFFSV. Over 659-705 the chain is Cytoplasmic; sequence YGMCVDTLFLCFLEDLERNDGSAERPYFMSSTLKKLLNKTNKKVAES.

This sequence belongs to the CTL (choline transporter-like) family. Interacts with COCH. N-glycosylated.

Its subcellular location is the cell membrane. The protein resides in the mitochondrion outer membrane. The catalysed reaction is choline(out) + n H(+)(in) = choline(in) + n H(+)(out). The enzyme catalyses ethanolamine(out) + n H(+)(in) = ethanolamine(in) + n H(+)(out). In terms of biological role, exhibits choline transporter activity, as choline/H+ antiporter. Also acts as a low-affinity ethanolamine/H+ antiporter, regulating the supply of extracellular ethanolamine (Etn) for the CDP-Etn pathway, redistribute intracellular Etn and balance the CDP-Cho and CDP-Etn arms of the Kennedy pathway. In Rattus norvegicus (Rat), this protein is Choline transporter-like protein 2 (Slc44a2).